Consider the following 201-residue polypeptide: Lipoprotein signal peptidase (201 aa).

3 helical membrane-spanning segments follow: residues 33–53, 86–106, and 110–130; these read LLLSIAAVVLTLDIVTKVLAV, GYTWVLTLIATGVVIGIFWMG, and VSSWWALGLGMILGGAMGNLV. Residues Asp-146 and Asp-160 contribute to the active site. Residues 158-178 traverse the membrane as a helical segment; the sequence is VADPSVVVGAILLVVLSIFGF.

It belongs to the peptidase A8 family.

It is found in the cell membrane. The enzyme catalyses Release of signal peptides from bacterial membrane prolipoproteins. Hydrolyzes -Xaa-Yaa-Zaa-|-(S,diacylglyceryl)Cys-, in which Xaa is hydrophobic (preferably Leu), and Yaa (Ala or Ser) and Zaa (Gly or Ala) have small, neutral side chains.. Its pathway is protein modification; lipoprotein biosynthesis (signal peptide cleavage). Functionally, this protein specifically catalyzes the removal of signal peptides from prolipoproteins. The chain is Lipoprotein signal peptidase from Mycobacterium leprae (strain Br4923).